A 184-amino-acid chain; its full sequence is MSRQNPVRSTRGNSLRAREAQQAQDAPLFQESSSNVFVVEKVLNKRLTRGGSEYYIKWQGFPESECSWEPIENLQCDRMIQEYEKEAAKRTTRKRRYSPQPSTSSSAELQPSTSDEWAGKTLKTIIGITKAPGELHFLCKFSDDSVHLIPLREANVRFPSQVIKFYETRLVLQGVSPTIPGGMS.

Residues 1 to 13 show a composition bias toward polar residues; the sequence is MSRQNPVRSTRGN. 2 disordered regions span residues 1–27 and 87–115; these read MSRQ…QDAP and AAKR…STSD. Positions 37–95 constitute a Chromo domain; that stretch reads FVVEKVLNKRLTRGGSEYYIKWQGFPESECSWEPIENLQCDRMIQEYEKEAAKRTTRKR. Residues 99–115 are compositionally biased toward polar residues; it reads PQPSTSSSAELQPSTSD.

In terms of assembly, interacts with histone demethylase spr-5. Interacts with chromobox protein homolog hpl-2. Interacts with histone H3 tails methylated at 'Lys-9' (H3K9me3) and 'Lys-23'(H3K23me2). Interacts with histone H1 variant his-24 (when monomethylated at 'Lys-14'); the interaction is direct. May interact with the REST corepressor rcor-1, histone deacetylase hda-1, and the histone demethylase lsd-1.

The protein localises to the nucleus. Functionally, seems to be involved in transcriptional silencing in heterochromatin-like complexes. Involved in epigenetic repression. Probably does not act as global transcriptional repressor. Plays a role in linking epigenetic regulation with the innate immune response. Acting in concert with chromobox protein homolog hpl-2 and histone H1 protein his-24, involved in reproduction, somatic gonad development, male tail development and vulval cell fate decisions; perhaps as a result of modulating expression of Hox genes mab-5 and egl-5. Role in growth and somatic gonad development is antagonized by histone-lysine N-methyltransferase set-2/SET1. Required for larval development, acting redundantly with hpl-2. Plays a role in the formation of the vulva and in fertility, acting together with a CoREST-like complex, and hpl-2. This Caenorhabditis elegans protein is Chromobox protein homolog hpl-1.